The primary structure comprises 292 residues: Undecaprenyl-diphosphatase (292 aa).

A run of 7 helical transmembrane segments spans residues 1–21 (MSLV…FLPV), 46–66 (FVTI…RADI), 90–110 (LGWY…LLEH), 114–134 (ALGN…LLAA), 192–212 (FLLS…STVP), 225–245 (VVGT…LLAW), and 253–273 (VFVV…LSGV).

Belongs to the UppP family.

It is found in the cell inner membrane. The catalysed reaction is di-trans,octa-cis-undecaprenyl diphosphate + H2O = di-trans,octa-cis-undecaprenyl phosphate + phosphate + H(+). Catalyzes the dephosphorylation of undecaprenyl diphosphate (UPP). Confers resistance to bacitracin. The sequence is that of Undecaprenyl-diphosphatase from Anaeromyxobacter sp. (strain K).